The chain runs to 341 residues: UDP-3-O-acylglucosamine N-acyltransferase (341 aa).

Histidine 239 acts as the Proton acceptor in catalysis.

It belongs to the transferase hexapeptide repeat family. LpxD subfamily. Homotrimer.

It catalyses the reaction a UDP-3-O-[(3R)-3-hydroxyacyl]-alpha-D-glucosamine + a (3R)-hydroxyacyl-[ACP] = a UDP-2-N,3-O-bis[(3R)-3-hydroxyacyl]-alpha-D-glucosamine + holo-[ACP] + H(+). It participates in bacterial outer membrane biogenesis; LPS lipid A biosynthesis. Functionally, catalyzes the N-acylation of UDP-3-O-acylglucosamine using 3-hydroxyacyl-ACP as the acyl donor. Is involved in the biosynthesis of lipid A, a phosphorylated glycolipid that anchors the lipopolysaccharide to the outer membrane of the cell. The polypeptide is UDP-3-O-acylglucosamine N-acyltransferase (Idiomarina loihiensis (strain ATCC BAA-735 / DSM 15497 / L2-TR)).